We begin with the raw amino-acid sequence, 302 residues long: uncharacterized protein (302 aa).

10 consecutive transmembrane segments (helical) span residues 13-32 (GILLAISAYTMWGIAPIYFK), 42-64 (ILSHRVVWSFVLLAVLIHLGRRW), 77-96 (FWLLLVTALLVGGNWLIFIW), 106-125 (ASLGYYINPLLNVLLGMLFL), 132-150 (LQWFAVALAAIGVGIQLVV), 154-171 (VPIVAIALATSFGFYGLL), 183-202 (LFLETLFMLPAAAIYLIWLA), 217-239 (NLLLVCAGVVTTLPLLCFTGAAA), 246-265 (LGFFQYIGPSLMFLLAVLVY), and 275-297 (ITFAFIWSALVIFSVDGLKAGHA). The EamA domain maps to 22–149 (TMWGIAPIYF…AAIGVGIQLV (128 aa)).

Belongs to the EamA transporter family.

Its subcellular location is the cell membrane. This is an uncharacterized protein from Vibrio cholerae serotype O1 (strain ATCC 39315 / El Tor Inaba N16961).